Consider the following 267-residue polypeptide: Trehalose 2-sulfotransferase (267 aa).

Residues glutamine 14, 33 to 39, proline 48, and tryptophan 53 contribute to the alpha,alpha-trehalose site; that span reads EPQEFFQ. Glutamate 36 (proton acceptor) is an active-site residue.

Belongs to the Stf0 sulfotransferase family. Homodimer.

The enzyme catalyses alpha,alpha-trehalose + 3'-phosphoadenylyl sulfate = 2-O-sulfo-alpha,alpha-trehalose + adenosine 3',5'-bisphosphate + H(+). It participates in glycolipid metabolism. In terms of biological role, catalyzes the sulfuryl group transfer from 3'-phosphoadenosine-5'-phosphosulfate (PAPS) to trehalose, leading to trehalose-2-sulfate (T2S). The sulfation of trehalose is the first step in the biosynthesis of sulfolipid-1 (SL-1), a major cell wall glycolipid in pathogenic mycobacteria. Cannot use free glucose and unnatural stereoisomers of trehalose (alpha,beta (neo-trehalose) and beta,beta (iso-trehalose)) as substrates. This Mycolicibacterium smegmatis (strain ATCC 700084 / mc(2)155) (Mycobacterium smegmatis) protein is Trehalose 2-sulfotransferase.